Reading from the N-terminus, the 1170-residue chain is MNVLWIIALVGQLMRLVQGTATCAMYGNCGKKSVFGNELPCPVPRSFEPPVLSDETSKLLVEVCGEEWKEVRYACCTKDQVVALRDNLQKAQPLISSCPACLKNFNNLFCHFTCAADQGRFVNITKVEKSKEDKDIVAELDVFMNSSWASEFYDSCKNIKFSATNGYAMDLIGGGAKNYSQFLKFLGDAKPMLGGSPFQINYKYDLANEEKEWQEFNDEVYACDDAQYKCACSDCQESCPHLKPLKDGVCKVGPLPCFSLSVLIFYTICALFAFMWYYLCKRKKNGAMIVDDDIVPESGSLDESETNVFESFNNETNFFNGKLANLFTKVGQFSVENPYKILITTVFSIFVFSFIIFQYATLETDPINLWVSKNSEKFKEKEYFDDNFGPFYRTEQIFVVNETGPVLSYETLHWWFDVENFITEELQSSENIGYQDLCFRPTEDSTCVIESFTQYFQGALPNKDSWKRELQECGKFPVNCLPTFQQPLKTNLLFSDDDILNAHAFVVTLLLTNHTQSANRWEERLEEYLLDLKVPEGLRISFNTEISLEKELNNNNDISTVAISYLMMFLYATWALRRKDGKTRLLLGISGLLIVLASIVCAAGFLTLFGLKSTLIIAEVIPFLILAIGIDNIFLITHEYDRNCEQKPEYSIDQKIISAIGRMSPSILMSLLCQTGCFLIAAFVTMPAVHNFAIYSTVSVIFNGVLQLTAYVSILSLYEKRSNYKQITGNEETKESFLKTFYFKMLTQKRLIIIIFSAWFFTSLVFLPEIQFGLDQTLAVPQDSYLVDYFKDVYSFLNVGPPVYMVVKNLDLTKRQNQQKICGKFTTCERDSLANVLEQERHRSTITEPLANWLDDYFMFLNPQNDQCCRLKKGTDEVCPPSFPSRRCETCFQQGSWNYNMSGFPEGKDFMEYLSIWINAPSDPCPLGGRAPYSTALVYNETSVSASVFRTAHHPLRSQKDFIQAYSDGVRISSSFPELDMFAYSPFYIFFVQYQTLGPLTLKLIGSAIILIFFISSVFLQNIRSSFLLALVVTMIIVDIGALMALLGISLNAVSLVNLIICVGLGVEFCVHIVRSFTVVPSETKKDANSRVLYSLNTIGESVIKGITLTKFIGVCVLAFAQSKIFDVFYFRMWFTLIIVAALHALLFLPALLSLFGGESYRDDSIEAED.

The first 19 residues, 1 to 19 (MNVLWIIALVGQLMRLVQG), serve as a signal peptide directing secretion. Disulfide bonds link cysteine 23/cysteine 75, cysteine 29/cysteine 41, cysteine 64/cysteine 110, cysteine 76/cysteine 114, cysteine 98/cysteine 230, cysteine 101/cysteine 156, cysteine 223/cysteine 235, and cysteine 232/cysteine 239. N-linked (GlcNAc...) asparagine glycans are attached at residues asparagine 123, asparagine 145, and asparagine 178. A helical membrane pass occupies residues 260–280 (LSVLIFYTICALFAFMWYYLC). Residue asparagine 314 is glycosylated (N-linked (GlcNAc...) asparagine). The chain crosses the membrane as a helical span at residues 341-361 (ILITTVFSIFVFSFIIFQYAT). An N-linked (GlcNAc...) asparagine glycan is attached at asparagine 401. Intrachain disulfides connect cysteine 438-cysteine 447 and cysteine 473-cysteine 480. N-linked (GlcNAc...) asparagine glycosylation occurs at asparagine 513. The next 6 membrane-spanning stretches (helical) occupy residues 556 to 576 (NDISTVAISYLMMFLYATWAL), 585 to 605 (LLLGISGLLIVLASIVCAAGF), 616 to 636 (IIAEVIPFLILAIGIDNIFLI), 667 to 687 (ILMSLLCQTGCFLIAAFVTMP), 698 to 718 (VSVIFNGVLQLTAYVSILSLY), and 752 to 772 (IIIIFSAWFFTSLVFLPEIQF). One can recognise an SSD domain in the interval 557–717 (DISTVAISYL…LTAYVSILSL (161 aa)). Intrachain disulfides connect cysteine 822–cysteine 828, cysteine 868–cysteine 925, cysteine 869–cysteine 891, and cysteine 879–cysteine 888. N-linked (GlcNAc...) asparagine glycosylation is found at asparagine 900 and asparagine 940. Transmembrane regions (helical) follow at residues 1000–1020 (LTLKLIGSAIILIFFISSVFL), 1027–1047 (FLLALVVTMIIVDIGALMALL), 1054–1074 (VSLVNLIICVGLGVEFCVHIV), 1099–1119 (IGESVIKGITLTKFIGVCVLA), and 1133–1153 (MWFTLIIVAALHALLFLPALL).

This sequence belongs to the patched family.

It localises to the vacuole membrane. Involved in sphingolipid trafficking. May recycle sphingolipids between cellular membranous compartments. The sequence is that of NPC intracellular sterol transporter 1-related protein 1 from Saccharomyces cerevisiae (strain ATCC 204508 / S288c) (Baker's yeast).